A 440-amino-acid chain; its full sequence is Glutamyl-tRNA reductase (440 aa).

Residues 40–43 (TCNR), Ser-100, 105–107 (ERE), and Gln-111 contribute to the substrate site. Cys-41 functions as the Nucleophile in the catalytic mechanism. 181–186 (GTGAYA) contributes to the NADP(+) binding site.

The protein belongs to the glutamyl-tRNA reductase family. Homodimer.

The enzyme catalyses (S)-4-amino-5-oxopentanoate + tRNA(Glu) + NADP(+) = L-glutamyl-tRNA(Glu) + NADPH + H(+). It participates in porphyrin-containing compound metabolism; protoporphyrin-IX biosynthesis; 5-aminolevulinate from L-glutamyl-tRNA(Glu): step 1/2. Catalyzes the NADPH-dependent reduction of glutamyl-tRNA(Glu) to glutamate 1-semialdehyde (GSA). This Renibacterium salmoninarum (strain ATCC 33209 / DSM 20767 / JCM 11484 / NBRC 15589 / NCIMB 2235) protein is Glutamyl-tRNA reductase.